The sequence spans 325 residues: 8-oxo-dGDP phosphatase NUDT18 (325 aa).

The 126-residue stretch at 38–163 folds into the Nudix hydrolase domain; that stretch reads NVCYIVGAVI…DILSLIDAGL (126 aa). Residue L55 participates in Mg(2+) binding. A Nudix box motif is present at residues 73–94; the sequence is GRMEECESILEALQREVREEAG.

Belongs to the Nudix hydrolase family. It depends on Mn(2+) as a cofactor. The cofactor is Mg(2+).

It carries out the reaction 8-oxo-dGDP + H2O = 8-oxo-dGMP + phosphate + H(+). The enzyme catalyses 8-oxo-dADP + H2O = 8-oxo-dAMP + phosphate + H(+). It catalyses the reaction 2-oxo-dADP + H2O = 2-oxo-dAMP + phosphate + H(+). The catalysed reaction is 8-oxo-GDP + H2O = 8-oxo-GMP + phosphate + H(+). Functionally, mediates the hydrolysis of oxidized nucleoside diphosphate derivatives. Hydrolyzes 8-oxo-7,8-dihydroguanine (8-oxo-Gua)-containing deoxyribo- and ribonucleoside diphosphates to the monophosphates. Hydrolyzes 8-oxo-dGDP and 8-oxo-GDP with the same efficiencies. Also hydrolyzes 8-OH-dADP and 2-OH-dADP. Exhibited no or minimal hydrolysis activity against 8-oxo-dGTP, 8-oxo-GTP, dGTP, GTP, dGDP and GDP. Probably removes oxidized guanine nucleotides from both the DNA and RNA precursor pools. This chain is 8-oxo-dGDP phosphatase NUDT18 (nudt18), found in Danio rerio (Zebrafish).